The following is a 380-amino-acid chain: MVDQKKFNERINDLVEEAEEKPVRRAKKEKPNLKESIYSFQPHQLEDWLKENGEKPFRAAQIFDWLYNKRVKTFEEMSNLSKGLRDKLAANFALSTLSTIIKQESKDGTIKFLFQLQDGYSIETVLMRHEYGNSVCVTTQVGCRIGCTFCASTLGGLKRHLLAGEIVEQVVKVQQTLDEVNERVSHIVIMGIGEPFDNYDAMMNFLKVINHEKGLNIGARHITVSTSGIVPKIYQFADEQLQINFAVSLHAPNQEARQKLMPIARAYKLDELMEAVRYYTKKTGRRVSFEYGLMSGENDSVEIAEELSALIKGIKCHVNLIPVNYVPERDYVRTSRSQIFAFEKTLKKNGINVTIRREQGSDIAAACGQLRAQERSEETR.

The active-site Proton acceptor is E123. The Radical SAM core domain occupies 129–362 (HEYGNSVCVT…VTIRREQGSD (234 aa)). C136 and C367 are disulfide-bonded. [4Fe-4S] cluster contacts are provided by C143, C147, and C150. S-adenosyl-L-methionine is bound by residues 193–194 (GE), S225, 248–250 (SLH), and N324. The S-methylcysteine intermediate role is filled by C367.

The protein belongs to the radical SAM superfamily. RlmN family. Requires [4Fe-4S] cluster as cofactor.

It localises to the cytoplasm. It carries out the reaction adenosine(2503) in 23S rRNA + 2 reduced [2Fe-2S]-[ferredoxin] + 2 S-adenosyl-L-methionine = 2-methyladenosine(2503) in 23S rRNA + 5'-deoxyadenosine + L-methionine + 2 oxidized [2Fe-2S]-[ferredoxin] + S-adenosyl-L-homocysteine. It catalyses the reaction adenosine(37) in tRNA + 2 reduced [2Fe-2S]-[ferredoxin] + 2 S-adenosyl-L-methionine = 2-methyladenosine(37) in tRNA + 5'-deoxyadenosine + L-methionine + 2 oxidized [2Fe-2S]-[ferredoxin] + S-adenosyl-L-homocysteine. Specifically methylates position 2 of adenine 2503 in 23S rRNA and position 2 of adenine 37 in tRNAs. The chain is Probable dual-specificity RNA methyltransferase RlmN from Lysinibacillus sphaericus (strain C3-41).